The following is an 828-amino-acid chain: DNA gyrase subunit A (828 aa).

Residues 38–501 (LPDARDGLKP…SYESIDTEDL (464 aa)) form the Topo IIA-type catalytic domain. Tyr-126 acts as the O-(5'-phospho-DNA)-tyrosine intermediate in catalysis. A GyrA-box motif is present at residues 528-534 (QNRGGKG).

Belongs to the type II topoisomerase GyrA/ParC subunit family. Heterotetramer, composed of two GyrA and two GyrB chains. In the heterotetramer, GyrA contains the active site tyrosine that forms a transient covalent intermediate with DNA, while GyrB binds cofactors and catalyzes ATP hydrolysis.

The protein localises to the cytoplasm. The catalysed reaction is ATP-dependent breakage, passage and rejoining of double-stranded DNA.. A type II topoisomerase that negatively supercoils closed circular double-stranded (ds) DNA in an ATP-dependent manner to modulate DNA topology and maintain chromosomes in an underwound state. Negative supercoiling favors strand separation, and DNA replication, transcription, recombination and repair, all of which involve strand separation. Also able to catalyze the interconversion of other topological isomers of dsDNA rings, including catenanes and knotted rings. Type II topoisomerases break and join 2 DNA strands simultaneously in an ATP-dependent manner. This chain is DNA gyrase subunit A, found in Helicobacter pylori (strain J99 / ATCC 700824) (Campylobacter pylori J99).